A 154-amino-acid chain; its full sequence is Xanthine-guanine phosphoribosyltransferase (154 aa).

5-phospho-alpha-D-ribose 1-diphosphate is bound by residues Arg-37–Gly-38, Arg-69, and Glu-88–Thr-96. Residue Arg-69 participates in GMP binding. Position 89 (Asp-89) interacts with Mg(2+). Asp-92 and Ile-135 together coordinate guanine. Residues Asp-92 and Ile-135 each coordinate xanthine. Residues Asp-92–Thr-96 and Trp-134–Ile-135 each bind GMP.

It belongs to the purine/pyrimidine phosphoribosyltransferase family. XGPT subfamily. Homotetramer. Mg(2+) serves as cofactor.

It localises to the cell inner membrane. It catalyses the reaction GMP + diphosphate = guanine + 5-phospho-alpha-D-ribose 1-diphosphate. It carries out the reaction XMP + diphosphate = xanthine + 5-phospho-alpha-D-ribose 1-diphosphate. The catalysed reaction is IMP + diphosphate = hypoxanthine + 5-phospho-alpha-D-ribose 1-diphosphate. It functions in the pathway purine metabolism; GMP biosynthesis via salvage pathway; GMP from guanine: step 1/1. Its pathway is purine metabolism; XMP biosynthesis via salvage pathway; XMP from xanthine: step 1/1. Purine salvage pathway enzyme that catalyzes the transfer of the ribosyl-5-phosphate group from 5-phospho-alpha-D-ribose 1-diphosphate (PRPP) to the N9 position of the 6-oxopurines guanine and xanthine to form the corresponding ribonucleotides GMP (guanosine 5'-monophosphate) and XMP (xanthosine 5'-monophosphate), with the release of PPi. To a lesser extent, also acts on hypoxanthine. In Vibrio campbellii (strain ATCC BAA-1116), this protein is Xanthine-guanine phosphoribosyltransferase.